The following is a 757-amino-acid chain: DNA endonuclease RBBP8 (757 aa).

The segment at 22–45 is essential for binding to the MRN complex and for RPA focus formation on DNA damage; the sequence is DLWTKLKEYHDKETQGLQVKVTKL. Residues 35 to 84 are a coiled coil; it reads TQGLQVKVTKLKKERILDAQRLEEFFTKNQQLREQQKVLHETIKVLEDRL. The tract at residues 45–160 is required for interaction with LMO4, probably by stabilizing the interaction through RPPB8 dimerization; it reads LKKERILDAQ…TDLESEEDVI (116 aa). Glycyl lysine isopeptide (Lys-Gly) (interchain with G-Cter in SUMO2) cross-links involve residues lysine 62 and lysine 115. A coiled-coil region spans residues 117-138; the sequence is ITELMNEKNTLQEENKKLSEQL. Lysine 193 participates in a covalent cross-link: Glycyl lysine isopeptide (Lys-Gly) (interchain with G-Cter in SUMO2). Serine 272 bears the Phosphoserine mark. Threonine 309 carries the post-translational modification Phosphothreonine. Phosphoserine is present on residues serine 320, serine 321, and serine 343. Positions 348-375 are disordered; it reads GKKTHLKTVPLSNTSAPGPEKPRSKSED. Glycyl lysine isopeptide (Lys-Gly) (interchain with G-Cter in SUMO2) cross-links involve residues lysine 354 and lysine 372. Serine 373 carries the phosphoserine modification. Glycyl lysine isopeptide (Lys-Gly) (interchain with G-Cter in SUMO2) cross-links involve residues lysine 390, lysine 399, and lysine 405. Residues 407–417 are compositionally biased toward polar residues; the sequence is TSEPISEQGNI. The segment at 407-430 is disordered; it reads TSEPISEQGNIGHSKDTDRDKHVV. Residues 419 to 429 are compositionally biased toward basic and acidic residues; that stretch reads HSKDTDRDKHV. Glycyl lysine isopeptide (Lys-Gly) (interchain with G-Cter in SUMO2) cross-links involve residues lysine 433 and lysine 443. The PXDLS motif stretch occupies residues 484–488; sequence PLDLS. Positions 484–488 match the PXDLS motif motif; that stretch reads PLDLS. The interval 503 to 551 is damage-recruitment motif; the sequence is CENSKIRFRQVTLYEALKPIPRDSSSSRKALSGSCGLTKDSPEEPCLQE. Lysine 520 participates in a covalent cross-link: Glycyl lysine isopeptide (Lys-Gly) (interchain with G-Cter in SUMO2); alternate. The segment at 524–544 is disordered; that stretch reads RDSSSSRKALSGSCGLTKDSP. Glycyl lysine isopeptide (Lys-Gly) (interchain with G-Cter in SUMO2) cross-links involve residues lysine 564 and lysine 570. A Glycyl lysine isopeptide (Lys-Gly) (interchain with G-Cter in SUMO2); alternate cross-link involves residue lysine 596. Residues lysine 605, lysine 630, and lysine 632 each participate in a glycyl lysine isopeptide (Lys-Gly) (interchain with G-Cter in SUMO2) cross-link. The segment at 633 to 677 is required for interaction with LMO4, probably by making physical contact with LMO4; sequence SLQNNQDVSFENIQWSIDPGADLSQYKMGVTVDDTKDGSQSRLAG. Phosphoserine; by ATM is present on serine 656. Residue lysine 668 forms a Glycyl lysine isopeptide (Lys-Gly) (interchain with G-Cter in SUMO2) linkage. Serine 671 is subject to Phosphoserine. Positions 696–728 are enriched in basic and acidic residues; it reads KKQEQKGEESPNGERKMNDSLEDMFDRTTHEEY. The segment at 696–757 is disordered; it reads KKQEQKGEES…TTTKKPNISW (62 aa). Lysine 711 participates in a covalent cross-link: Glycyl lysine isopeptide (Lys-Gly) (interchain with G-Cter in SUMO2). Serine 715 bears the Phosphoserine mark. Over residues 747 to 757 the composition is skewed to polar residues; the sequence is STTTKKPNISW.

It belongs to the COM1/SAE2/CtIP family. As to quaternary structure, homotetramer; formed by antiparallel association of helical extensions protruding from the N-termini of two parallel coiled-coil dimers. Forms a dumbbell-shaped particle in which polar globular domains are held about 30 nm apart by a central rod. Homotetramerization is required for DNA-end resection and repair. Interacts (via the PXDLS motif) with CTBP1; the interaction is disrupted via binding of the adenovirus E1A to CTBP1. Component of the BRCA1-RBBP8 complex. Interacts (the Ser-321 phosphorylated form) with BRCA1 (via the C-terminal BRCT domains): the interaction occurs in the G2 phase, ubiquitinates RBBP8 and involves RBBP8 in BRCA1-dependent G2/M checkpoint control on DNA damage. Interacts with RB1. Interacts with the MRN complex. Interacts directly with MRE11; the interaction is required for efficient homologous recombination (HR) and regulation of the MRN complex. Interacts directly with RAD50. Interacts (when phosphorylated by CDK1) with NBN; promoting association with the MRN complex. Interacts with LMO4 (via the LIM zinc-binding 1 domain). Interacts with SIAH1. Interacts with RNF138. Interacts with EXD2. Interacts with CUL3 and KLHL15; this interaction leads to RBBP8 proteasomal degradation. Directly interacts with PIN1; this interaction depends upon RBBP8 phosphorylation, predominantly at Thr-309. Interacts with FZR1; this interaction leads to APC/C-mediated RBBP8 proteasomal degradation. Interacts with AUNIP; leading to recruit RBBP8 to sites of DNA damage. Interacts with SAMHD1. Interacts with HDGFL2. Post-translationally, hyperphosphorylation upon ionizing radiation results in dissociation from BRCA1. Phosphorylation by CDK1 is essential for the recruitment to DNA and the DNA repair function. Phosphorylated on Ser-321 as cells enter G2 phase. This phosphorylation is required for binding BRCA1 and for the G2/M DNA damage transition checkpoint control. Phosphorylation at Thr-309, probably catalyzed by CDK2, is required for PIN1-binding, while phosphorylation at Ser-272 serves as a PIN1 isomerization site. Phosphorylation at Thr-309 is cell-cycle dependent. It steadily increases during S phase, peaks at late S/G2 phase, and drops at G1. Phosphorylation is not required for tetramerization. Binds to DNA more strongly when dephosphorylated. In terms of processing, ubiquitinated. Ubiquitination at multiple sites by BRCA1 (via its N-terminal RING domain) does not lead to its proteasomal degradation but instead the ubiquitinated RBBP8 binds to chromatin following DNA damage and may play a role in G2/M checkpoint control. Ubiquitinated by RNF138 at its N-terminus. Ubiquitinated through 'Lys-48' by the E3 CUL3-KLHL15 complex; this modification leads to proteasomal degradation. Ubiquitinated by the E3 FZR1/APC/C complex; this modification leads to proteasomal degradation.

The protein resides in the nucleus. The protein localises to the chromosome. Endonuclease that cooperates with the MRE11-RAD50-NBN (MRN) complex in DNA-end resection, the first step of double-strand break (DSB) repair through the homologous recombination (HR) pathway. HR is restricted to S and G2 phases of the cell cycle and preferentially repairs DSBs resulting from replication fork collapse. Key determinant of DSB repair pathway choice, as it commits cells to HR by preventing classical non-homologous end-joining (NHEJ). Specifically promotes the endonuclease activity of the MRN complex to clear DNA ends containing protein adducts: recruited to DSBs by NBN following phosphorylation by CDK1, and promotes the endonuclease activity of MRE11 to clear protein-DNA adducts and generate clean double-strand break ends. Functions downstream of the MRN complex and ATM, promotes ATR activation and its recruitment to DSBs in the S/G2 phase facilitating the generation of ssDNA. Component of the BRCA1-RBBP8 complex that regulates CHEK1 activation and controls cell cycle G2/M checkpoints on DNA damage. During immunoglobulin heavy chain class-switch recombination, promotes microhomology-mediated alternative end joining (A-NHEJ) and plays an essential role in chromosomal translocations. Binds preferentially to DNA Y-junctions and to DNA substrates with blocked ends and promotes intermolecular DNA bridging. The sequence is that of DNA endonuclease RBBP8 (RBBP8) from Bos taurus (Bovine).